We begin with the raw amino-acid sequence, 240 residues long: Terpene cyclase cdmG (240 aa).

Helical transmembrane passes span 16–36 (YASI…LNYG), 48–68 (YGMA…YTVI), 78–98 (IIMT…IKFA), 112–132 (IPFI…ALAA), 134–154 (VGPG…LTIG), and 167–187 (GVSY…VICV). An N-linked (GlcNAc...) asparagine glycan is attached at Asn-197. The helical transmembrane segment at 205–225 (IMKCFSGISLAVEIVYGVTLW) threads the bilayer.

This sequence belongs to the paxB family.

Its subcellular location is the membrane. The enzyme catalyses verruculide C epoxide = 3-hydroxypentacecilide A. The protein operates within secondary metabolite biosynthesis; terpenoid biosynthesis. Functionally, terpene cyclase; part of the gene cluster that mediates the biosynthesis of chrodrimanin B, a meroterpenoid that acts as a potent blocker of insect GABA-gated chloride channels. The first step of the pathway is the biosynthesis of 6-hydroxymellein by the polyketide synthase cdmE. The prenyltransferase cdmH acts as a 6-hydroxymellein 5-farnesyltransferase and produces the hydrophobic metabolite verruculide C. The FAD-dependent monooxygenase cdmI further converts verruculide C into verruculide B. The terpene cyclase cdmG then produced the pentacyclic molecule 3-hydroxypentacecilide A, the backbone structure of chrodrimanin B, via folding the farnesyl moiety of the substrate into the chair-boat conformation. The short-chain dehydrogenase/reductase cdmF functions as the 3-OH dehydrogenase that oxidizes the C-3 hydroxyl group of 3-hydroxypentacecilide A and produces chrodrimanin C, the dehydrogenated product of 3-hydroxypentacecilide A. The cytochrome P450 monooxygenase cdmJ then accepts both 3-hydroxypentacecilide A and chrodrimanin C and functions as a C-7-beta-hydroxylase to produce respectively chrodrimanin H and chrodrimanin F. The dioxygenase cdmA accepts chrodrimanin H to afford chrodrimanin E, which is further transformed to chrodrimanin A by the dioxygenase cdmD. CdmA can also accept chrodrimanin C as substrate to convert it into verruculide A, which is further converted into chrodrimanin T by cdmD. The last step of the biosynthesis is proposed to be performed by the acetyltransferase cdmC which acetylates chrodrimanin A to yield chrodrimanin B. The pathway may also lead to the production of additional shunt products, including chrodrimanins T and U. The chain is Terpene cyclase cdmG from Talaromyces verruculosus (Penicillium verruculosum).